Reading from the N-terminus, the 118-residue chain is Nucleoid-associated protein CTN_1899 (118 aa).

It belongs to the YbaB/EbfC family. As to quaternary structure, homodimer.

Its subcellular location is the cytoplasm. The protein resides in the nucleoid. In terms of biological role, binds to DNA and alters its conformation. May be involved in regulation of gene expression, nucleoid organization and DNA protection. The protein is Nucleoid-associated protein CTN_1899 of Thermotoga neapolitana (strain ATCC 49049 / DSM 4359 / NBRC 107923 / NS-E).